A 303-amino-acid chain; its full sequence is MTKPLTISQVQPKITLQWRAYFEMTKPKVVALMLLTVLVGMCLSVPGIVPLQPLVAGMAGIAMMAGSAAAFNHLIDRKIDGLMARTYNRPLPKGKISTTKAVTFAVSLGSLGFVVLYTLVNPLTAWLTFASLIGYALVYTAYLKRATSQNIVIGGLAGAMPPLLGWTAITNELHGYALLLVIIIFTWTPPHFWALAIHRRKEYAKVDIPMLPVTHGVEFTKTCILLYTILLAIACLLPVLVGMCGPIYLVGSTVLSCGFIYKAWQLKFHDYPELSMQVFKFSIYHLMVLFIVLLVDHYFWVNA.

Transmembrane regions (helical) follow at residues 29–49, 51–71, 96–118, 123–143, 150–170, 177–197, 223–243, 244–264, and 281–301; these read VVAL…PGIV, LQPL…AAAF, ISTT…VLYT, LTAW…TAYL, NIVI…TAIT, ALLL…ALAI, CILL…LVGM, CGPI…YKAW, and FSIY…YFWV.

Belongs to the UbiA prenyltransferase family. Protoheme IX farnesyltransferase subfamily.

It is found in the cell inner membrane. It catalyses the reaction heme b + (2E,6E)-farnesyl diphosphate + H2O = Fe(II)-heme o + diphosphate. It functions in the pathway porphyrin-containing compound metabolism; heme O biosynthesis; heme O from protoheme: step 1/1. Functionally, converts heme B (protoheme IX) to heme O by substitution of the vinyl group on carbon 2 of heme B porphyrin ring with a hydroxyethyl farnesyl side group. This Shewanella frigidimarina (strain NCIMB 400) protein is Protoheme IX farnesyltransferase 2.